The following is a 232-amino-acid chain: Cell surface superoxide dismutase [Cu-Zn] 4 (232 aa).

A signal peptide spans 1-15 (MKYLSIISIVALALA). N53 carries an N-linked (GlcNAc...) asparagine glycan. 2 residues coordinate Cu cation: H75 and H77. A glycan (N-linked (GlcNAc...) asparagine) is linked at N86. H93 serves as a coordination point for Cu cation. H93 contributes to the Zn(2+) binding site. N98 carries N-linked (GlcNAc...) asparagine glycosylation. D113 contributes to the Zn(2+) binding site. Residue N120 is glycosylated (N-linked (GlcNAc...) asparagine). H153 is a Cu cation binding site. N-linked (GlcNAc...) asparagine glycosylation is found at N156, N164, N182, N193, and N196. Residues 174 to 208 (TASAATWSNSSSSSSSSSKNSTNGSSGSSTSASQG) are compositionally biased toward low complexity. The interval 174 to 211 (TASAATWSNSSSSSSSSSKNSTNGSSGSSTSASQGSGA) is disordered. S209 is lipidated: GPI-anchor amidated serine. The propeptide at 210 to 232 (GAGRAEISGFLAAGIAGVVAALI) is removed in mature form. Substrate is bound at residue R213.

This sequence belongs to the Cu-Zn superoxide dismutase family. The cofactor is Cu cation. Zn(2+) is required as a cofactor. Post-translationally, the GPI-anchor is attached to the protein in the endoplasmic reticulum and serves to target the protein to the cell surface. There, the glucosamine-inositol phospholipid moiety is cleaved off and the GPI-modified mannoprotein is covalently attached via its lipidless GPI glycan remnant to the 1,6-beta-glucan of the outer cell wall layer.

Its subcellular location is the secreted. It localises to the cell wall. The protein localises to the membrane. The catalysed reaction is 2 superoxide + 2 H(+) = H2O2 + O2. Superoxide dismutases serve to convert damaging superoxide radicals, a key form of ROS, to less damaging hydrogen peroxide that can be converted into water by catalase action. Degrades host-derived reactive oxygen species to escape innate immune surveillance. Involved in the occurrence of miconazole-tolerant persisters in biofilms. Persisters are cells that survive high doses of an antimicrobial agent. The polypeptide is Cell surface superoxide dismutase [Cu-Zn] 4 (SOD4) (Candida albicans (strain SC5314 / ATCC MYA-2876) (Yeast)).